Reading from the N-terminus, the 127-residue chain is Phosphoribosyl-AMP cyclohydrolase (127 aa).

Aspartate 78 is a binding site for Mg(2+). Residue cysteine 79 coordinates Zn(2+). 2 residues coordinate Mg(2+): aspartate 80 and aspartate 82. Zn(2+)-binding residues include cysteine 95 and cysteine 102.

This sequence belongs to the PRA-CH family. Homodimer. Requires Mg(2+) as cofactor. It depends on Zn(2+) as a cofactor.

It is found in the cytoplasm. It carries out the reaction 1-(5-phospho-beta-D-ribosyl)-5'-AMP + H2O = 1-(5-phospho-beta-D-ribosyl)-5-[(5-phospho-beta-D-ribosylamino)methylideneamino]imidazole-4-carboxamide. It functions in the pathway amino-acid biosynthesis; L-histidine biosynthesis; L-histidine from 5-phospho-alpha-D-ribose 1-diphosphate: step 3/9. In terms of biological role, catalyzes the hydrolysis of the adenine ring of phosphoribosyl-AMP. This is Phosphoribosyl-AMP cyclohydrolase from Salinibacter ruber (strain DSM 13855 / M31).